Reading from the N-terminus, the 503-residue chain is Lysine--tRNA ligase (503 aa).

Residues Glu412 and Glu419 each coordinate Mg(2+).

This sequence belongs to the class-II aminoacyl-tRNA synthetase family. As to quaternary structure, homodimer. Mg(2+) is required as a cofactor.

Its subcellular location is the cytoplasm. It catalyses the reaction tRNA(Lys) + L-lysine + ATP = L-lysyl-tRNA(Lys) + AMP + diphosphate. The sequence is that of Lysine--tRNA ligase from Idiomarina loihiensis (strain ATCC BAA-735 / DSM 15497 / L2-TR).